The primary structure comprises 186 residues: Peptidyl-tRNA hydrolase (186 aa).

Tyr14 lines the tRNA pocket. His19 acts as the Proton acceptor in catalysis. 3 residues coordinate tRNA: Tyr61, Asn63, and Asn107.

This sequence belongs to the PTH family. In terms of assembly, monomer.

It is found in the cytoplasm. It carries out the reaction an N-acyl-L-alpha-aminoacyl-tRNA + H2O = an N-acyl-L-amino acid + a tRNA + H(+). In terms of biological role, hydrolyzes ribosome-free peptidyl-tRNAs (with 1 or more amino acids incorporated), which drop off the ribosome during protein synthesis, or as a result of ribosome stalling. Catalyzes the release of premature peptidyl moieties from peptidyl-tRNA molecules trapped in stalled 50S ribosomal subunits, and thus maintains levels of free tRNAs and 50S ribosomes. The chain is Peptidyl-tRNA hydrolase from Helicobacter pylori (strain P12).